The sequence spans 153 residues: Insulin-like growth factor 1 (153 aa).

A b region spans residues 49-77 (GPETLCGAELVDALQFVCGDRGFYFSKPT). 3 cysteine pairs are disulfide-bonded: cysteine 54–cysteine 96, cysteine 66–cysteine 109, and cysteine 95–cysteine 100. The segment at 78–89 (GYGSSSRRLHHK) is c. The a stretch occupies residues 90–110 (GIVDECCFQSCDLRRLEMYCA). Residues 111-118 (PIKPPKSA) form a d region. A propeptide spans 119–153 (RSVRAQRHTDMPKAQKEVHLKNTSRGNTGNRNYRM) (e peptide). Residues 119–153 (RSVRAQRHTDMPKAQKEVHLKNTSRGNTGNRNYRM) form a disordered region. Residues 125–138 (RHTDMPKAQKEVHL) show a composition bias toward basic and acidic residues. A compositionally biased stretch (polar residues) spans 139 to 153 (KNTSRGNTGNRNYRM).

It belongs to the insulin family. Forms a ternary complex with IGFR1 and ITGAV:ITGB3. Forms a ternary complex with IGFR1 and ITGA6:ITGB4. Forms a ternary complex with IGFBP3 and ALS.

It localises to the secreted. In terms of biological role, the insulin-like growth factors, isolated from plasma, are structurally and functionally related to insulin but have a much higher growth-promoting activity. Acts as a ligand for IGF1R. Binds to the alpha subunit of IGF1R, leading to the activation of the intrinsic tyrosine kinase activity which autophosphorylates tyrosine residues in the beta subunit thus initiatiating a cascade of down-stream signaling events leading to activation of the PI3K-AKT/PKB and the Ras-MAPK pathways. Binds to integrins. Its binding to integrins and subsequent ternary complex formation with integrins and IGFR1 are essential for IGF1 signaling. This is Insulin-like growth factor 1 from Gallus gallus (Chicken).